Here is a 314-residue protein sequence, read N- to C-terminus: MRFKGLDLNLLVVLDALLTERTLTAAASSINLSQPAMSAAVARLRDYFNDELFTTSGRERVLTPRAETLAPAVRSALLQIQCSIISWDPFNPAQSDRRFRIILSDFATLVFFEKVVERVAREAPAVSFELLPIDDDPDELLRRGDVDFLIFPELFMSSAHPRAALFDETLVCVGCSTNKQLPRQLTFERYMSMRHVAVKFGRTLKPSIEEQFFLEHGLKRRVEIVVQAFSMIPPMVSGTARIATMPFRLVQHFKKTFPLRIIELPLPLPTFTEAVQWPALHNSDPASIWLREILLQEASRMTSPGDAKRRPRQP.

The 58-residue stretch at 6 to 63 (LDLNLLVVLDALLTERTLTAAASSINLSQPAMSAAVARLRDYFNDELFTTSGRERVLT) folds into the HTH lysR-type domain. Positions 23-42 (LTAAASSINLSQPAMSAAVA) form a DNA-binding region, H-T-H motif.

It belongs to the LysR transcriptional regulatory family.

Its function is as follows. NodD regulates the expression of the nodABCFE genes which encode other nodulation proteins. NodD is also a negative regulator of its own expression. Binds flavenoids as inducers. The sequence is that of Nodulation protein D 1 (nodD1) from Mesorhizobium japonicum (strain LMG 29417 / CECT 9101 / MAFF 303099) (Mesorhizobium loti (strain MAFF 303099)).